The sequence spans 413 residues: 1-deoxy-D-xylulose 5-phosphate reductoisomerase (413 aa).

Thr-13, Gly-14, Ser-15, Ile-16, Arg-40, Asn-41, and Asn-127 together coordinate NADPH. Position 128 (Lys-128) interacts with 1-deoxy-D-xylulose 5-phosphate. Glu-129 lines the NADPH pocket. Residue Asp-153 participates in Mn(2+) binding. 1-deoxy-D-xylulose 5-phosphate-binding residues include Ser-154, Glu-155, Ser-184, and His-207. Glu-155 serves as a coordination point for Mn(2+). Position 213 (Gly-213) interacts with NADPH. Positions 220, 225, 226, and 229 each coordinate 1-deoxy-D-xylulose 5-phosphate. Glu-229 contributes to the Mn(2+) binding site.

The protein belongs to the DXR family. The cofactor is Mg(2+). Mn(2+) serves as cofactor.

It carries out the reaction 2-C-methyl-D-erythritol 4-phosphate + NADP(+) = 1-deoxy-D-xylulose 5-phosphate + NADPH + H(+). Its pathway is isoprenoid biosynthesis; isopentenyl diphosphate biosynthesis via DXP pathway; isopentenyl diphosphate from 1-deoxy-D-xylulose 5-phosphate: step 1/6. Catalyzes the NADPH-dependent rearrangement and reduction of 1-deoxy-D-xylulose-5-phosphate (DXP) to 2-C-methyl-D-erythritol 4-phosphate (MEP). This Nitrosomonas europaea (strain ATCC 19718 / CIP 103999 / KCTC 2705 / NBRC 14298) protein is 1-deoxy-D-xylulose 5-phosphate reductoisomerase.